We begin with the raw amino-acid sequence, 274 residues long: NADPH-dependent 7-cyano-7-deazaguanine reductase (274 aa).

Position 80–82 (80–82 (VES)) interacts with substrate. Residue 82-83 (SK) coordinates NADPH. Catalysis depends on C181, which acts as the Thioimide intermediate. Residue D188 is the Proton donor of the active site. 220-221 (HE) contacts substrate. Residue 249–250 (RG) coordinates NADPH.

It belongs to the GTP cyclohydrolase I family. QueF type 2 subfamily. Homodimer.

It localises to the cytoplasm. It carries out the reaction 7-aminomethyl-7-carbaguanine + 2 NADP(+) = 7-cyano-7-deazaguanine + 2 NADPH + 3 H(+). It functions in the pathway tRNA modification; tRNA-queuosine biosynthesis. In terms of biological role, catalyzes the NADPH-dependent reduction of 7-cyano-7-deazaguanine (preQ0) to 7-aminomethyl-7-deazaguanine (preQ1). The protein is NADPH-dependent 7-cyano-7-deazaguanine reductase of Burkholderia lata (strain ATCC 17760 / DSM 23089 / LMG 22485 / NCIMB 9086 / R18194 / 383).